Here is a 228-residue protein sequence, read N- to C-terminus: Probable septum site-determining protein MinC (228 aa).

Belongs to the MinC family. In terms of assembly, interacts with MinD and FtsZ.

Functionally, cell division inhibitor that blocks the formation of polar Z ring septums. Rapidly oscillates between the poles of the cell to destabilize FtsZ filaments that have formed before they mature into polar Z rings. Prevents FtsZ polymerization. This is Probable septum site-determining protein MinC from Oceanobacillus iheyensis (strain DSM 14371 / CIP 107618 / JCM 11309 / KCTC 3954 / HTE831).